The following is a 133-amino-acid chain: Small ribosomal subunit protein uS8 (133 aa).

Belongs to the universal ribosomal protein uS8 family. In terms of assembly, part of the 30S ribosomal subunit.

One of the primary rRNA binding proteins, it binds directly to 16S rRNA central domain where it helps coordinate assembly of the platform of the 30S subunit. In Desulfurococcus amylolyticus (strain DSM 18924 / JCM 16383 / VKM B-2413 / 1221n) (Desulfurococcus kamchatkensis), this protein is Small ribosomal subunit protein uS8.